Consider the following 492-residue polypeptide: Fascin-2 (492 aa).

It belongs to the fascin family. Expressed in the inner ear. Abundant in the utricle.

The protein localises to the cytoplasm. It is found in the cytoskeleton. The protein resides in the cell projection. It localises to the stereocilium. Functionally, acts as an actin bundling protein. May play a pivotal role in photoreceptor cell-specific events, such as disk morphogenesis. Important for maintaining functional hair-cell bundles in the inner ear. May stiffen the longer stereocilia of hair-cell bundles in the inner ear enabling better force transmission to tip links. This Mus musculus (Mouse) protein is Fascin-2 (Fscn2).